The sequence spans 402 residues: MKITGARVIVTCPDRNFVTLKIETDEGLTGIGDATLNGRELAVASYLTDHVIPCLIGRDAHRIEDIWNYLYRGAYWRRGPVTMSAIAAVDTALWDIKAKAAGLPLYQLLGGRSRDGVMVYGHANGRDIEETTDEVARYIEMGYRAIRAQTGVPGLASTYGVSSDKMYYEPADAALPTENIWSTEKYLDHVPKLFDRLRDRFGFDHHLLHDVHHRLTPIEAGRLGKSLEPYRLFWMEDATPAENQEAFRLIRQHTVTPLAVGEVFNTIWDAKDLIQNQLIDYIRATVVHAGGISHLRRIADLAALYQVRTGCHGATDLSPVCMGAALHFDIWVPNFGVQEYMRHTEATDAVFPHAYSFASGYMTPGDVPGHGVEIDEKLAAKYPYKPCSLPVNRLEDGTLWHW.

Residues Asn37 and His122 each coordinate substrate. Tyr159 functions as the Proton donor/acceptor in the catalytic mechanism. Mg(2+) is bound at residue Asp210. The active-site Proton donor/acceptor is the His212. Positions 236 and 262 each coordinate Mg(2+). Residues Glu262, Arg283, His312, Asp316, and Glu339 each contribute to the substrate site.

It belongs to the mandelate racemase/muconate lactonizing enzyme family. GalD subfamily. Requires Mg(2+) as cofactor.

It catalyses the reaction D-mannonate = 2-dehydro-3-deoxy-D-gluconate + H2O. It functions in the pathway carbohydrate metabolism; pentose and glucuronate interconversion. Functionally, catalyzes the dehydration of D-mannonate. Has no detectable activity with a panel of 70 other acid sugars (in vitro). The chain is D-mannonate dehydratase from Rhizorhabdus wittichii (strain DSM 6014 / CCUG 31198 / JCM 15750 / NBRC 105917 / EY 4224 / RW1) (Sphingomonas wittichii).